A 164-amino-acid chain; its full sequence is Phosphopantetheine adenylyltransferase (164 aa).

S10 provides a ligand contact to substrate. ATP contacts are provided by residues 10–11 (SF) and H18. Positions 42, 74, and 88 each coordinate substrate. Residues 89 to 91 (GLR), E99, and 124 to 130 (YSFLSSS) each bind ATP.

This sequence belongs to the bacterial CoaD family. In terms of assembly, homohexamer. Mg(2+) serves as cofactor.

Its subcellular location is the cytoplasm. The catalysed reaction is (R)-4'-phosphopantetheine + ATP + H(+) = 3'-dephospho-CoA + diphosphate. The protein operates within cofactor biosynthesis; coenzyme A biosynthesis; CoA from (R)-pantothenate: step 4/5. Reversibly transfers an adenylyl group from ATP to 4'-phosphopantetheine, yielding dephospho-CoA (dPCoA) and pyrophosphate. This Bacillus licheniformis (strain ATCC 14580 / DSM 13 / JCM 2505 / CCUG 7422 / NBRC 12200 / NCIMB 9375 / NCTC 10341 / NRRL NRS-1264 / Gibson 46) protein is Phosphopantetheine adenylyltransferase.